The sequence spans 272 residues: Indole-3-glycerol phosphate synthase (272 aa).

The protein belongs to the TrpC family.

It catalyses the reaction 1-(2-carboxyphenylamino)-1-deoxy-D-ribulose 5-phosphate + H(+) = (1S,2R)-1-C-(indol-3-yl)glycerol 3-phosphate + CO2 + H2O. It participates in amino-acid biosynthesis; L-tryptophan biosynthesis; L-tryptophan from chorismate: step 4/5. The protein is Indole-3-glycerol phosphate synthase of Mycobacterium ulcerans (strain Agy99).